The following is a 69-amino-acid chain: Cytochrome c oxidase subunit 8A, mitochondrial (69 aa).

Residues Met-1–Lys-25 constitute a mitochondrion transit peptide. The SIFI-degron signature appears at Ser-2–Leu-19. Topologically, residues Val-26–Gly-36 are mitochondrial matrix. A helical transmembrane segment spans residues Ile-37–Ser-60. Residues His-61–Glu-69 lie on the Mitochondrial intermembrane side of the membrane.

Belongs to the cytochrome c oxidase VIII family. In terms of assembly, component of the cytochrome c oxidase (complex IV, CIV), a multisubunit enzyme composed of 14 subunits. The complex is composed of a catalytic core of 3 subunits MT-CO1, MT-CO2 and MT-CO3, encoded in the mitochondrial DNA, and 11 supernumerary subunits COX4I, COX5A, COX5B, COX6A, COX6B, COX6C, COX7A, COX7B, COX7C, COX8 and NDUFA4, which are encoded in the nuclear genome. The complex exists as a monomer or a dimer and forms supercomplexes (SCs) in the inner mitochondrial membrane with NADH-ubiquinone oxidoreductase (complex I, CI) and ubiquinol-cytochrome c oxidoreductase (cytochrome b-c1 complex, complex III, CIII), resulting in different assemblies (supercomplex SCI(1)III(2)IV(1) and megacomplex MCI(2)III(2)IV(2)). In response to mitochondrial stress, the precursor protein is ubiquitinated by the SIFI complex in the cytoplasm before mitochondrial import, leading to its degradation. Within the SIFI complex, UBR4 initiates ubiquitin chain that are further elongated or branched by KCMF1.

Its subcellular location is the mitochondrion inner membrane. It functions in the pathway energy metabolism; oxidative phosphorylation. Component of the cytochrome c oxidase, the last enzyme in the mitochondrial electron transport chain which drives oxidative phosphorylation. The respiratory chain contains 3 multisubunit complexes succinate dehydrogenase (complex II, CII), ubiquinol-cytochrome c oxidoreductase (cytochrome b-c1 complex, complex III, CIII) and cytochrome c oxidase (complex IV, CIV), that cooperate to transfer electrons derived from NADH and succinate to molecular oxygen, creating an electrochemical gradient over the inner membrane that drives transmembrane transport and the ATP synthase. Cytochrome c oxidase is the component of the respiratory chain that catalyzes the reduction of oxygen to water. Electrons originating from reduced cytochrome c in the intermembrane space (IMS) are transferred via the dinuclear copper A center (CU(A)) of subunit 2 and heme A of subunit 1 to the active site in subunit 1, a binuclear center (BNC) formed by heme A3 and copper B (CU(B)). The BNC reduces molecular oxygen to 2 water molecules using 4 electrons from cytochrome c in the IMS and 4 protons from the mitochondrial matrix. The sequence is that of Cytochrome c oxidase subunit 8A, mitochondrial (COX8A) from Macaca silenus (Lion-tailed macaque).